A 126-amino-acid polypeptide reads, in one-letter code: Fluoride-specific ion channel FluC (126 aa).

4 helical membrane passes run 7–27 (LWLALGGAVGAVCRQAAVLLL), 36–56 (FPAAVLLINVLGSFLLGLTLA), 74–94 (GVLGAFTTFSTFSTELDGLLL), and 98–118 (GGLALAYAALSVGLGLTAAVA). Positions 77 and 80 each coordinate Na(+).

Belongs to the fluoride channel Fluc/FEX (TC 1.A.43) family.

The protein localises to the cell membrane. The enzyme catalyses fluoride(in) = fluoride(out). Na(+) is not transported, but it plays an essential structural role and its presence is essential for fluoride channel function. In terms of biological role, fluoride-specific ion channel. Important for reducing fluoride concentration in the cell, thus reducing its toxicity. The protein is Fluoride-specific ion channel FluC of Deinococcus radiodurans (strain ATCC 13939 / DSM 20539 / JCM 16871 / CCUG 27074 / LMG 4051 / NBRC 15346 / NCIMB 9279 / VKM B-1422 / R1).